Reading from the N-terminus, the 259-residue chain is Deoxyribose-phosphate aldolase (259 aa).

Asp-104 serves as the catalytic Proton donor/acceptor. Lys-168 serves as the catalytic Schiff-base intermediate with acetaldehyde. Lys-200 serves as the catalytic Proton donor/acceptor.

This sequence belongs to the DeoC/FbaB aldolase family. DeoC type 2 subfamily.

Its subcellular location is the cytoplasm. The catalysed reaction is 2-deoxy-D-ribose 5-phosphate = D-glyceraldehyde 3-phosphate + acetaldehyde. Its pathway is carbohydrate degradation; 2-deoxy-D-ribose 1-phosphate degradation; D-glyceraldehyde 3-phosphate and acetaldehyde from 2-deoxy-alpha-D-ribose 1-phosphate: step 2/2. Its function is as follows. Catalyzes a reversible aldol reaction between acetaldehyde and D-glyceraldehyde 3-phosphate to generate 2-deoxy-D-ribose 5-phosphate. The polypeptide is Deoxyribose-phosphate aldolase (Agrobacterium fabrum (strain C58 / ATCC 33970) (Agrobacterium tumefaciens (strain C58))).